The chain runs to 233 residues: 7-cyano-7-deazaguanine synthase (233 aa).

7–17 (LSGGLDSAVTS) provides a ligand contact to ATP. Positions 195, 206, 209, and 212 each coordinate Zn(2+).

It belongs to the QueC family. The cofactor is Zn(2+).

It carries out the reaction 7-carboxy-7-deazaguanine + NH4(+) + ATP = 7-cyano-7-deazaguanine + ADP + phosphate + H2O + H(+). It functions in the pathway purine metabolism; 7-cyano-7-deazaguanine biosynthesis. Its function is as follows. Catalyzes the ATP-dependent conversion of 7-carboxy-7-deazaguanine (CDG) to 7-cyano-7-deazaguanine (preQ(0)). This is 7-cyano-7-deazaguanine synthase from Methanococcus maripaludis (strain C5 / ATCC BAA-1333).